A 1170-amino-acid polypeptide reads, in one-letter code: Error-prone DNA polymerase (1170 aa).

2 disordered regions span residues 867-899 (RGAR…LHND) and 1129-1170 (IPHG…RDFH). The span at 886 to 899 (PRNDNDRQIPLHND) shows a compositional bias: basic and acidic residues.

The protein belongs to the DNA polymerase type-C family. DnaE2 subfamily.

The protein localises to the cytoplasm. The enzyme catalyses DNA(n) + a 2'-deoxyribonucleoside 5'-triphosphate = DNA(n+1) + diphosphate. Functionally, DNA polymerase involved in damage-induced mutagenesis and translesion synthesis (TLS). It is not the major replicative DNA polymerase. In Bradyrhizobium sp. (strain ORS 278), this protein is Error-prone DNA polymerase.